A 142-amino-acid chain; its full sequence is Large ribosomal subunit protein uL22c (142 aa).

This sequence belongs to the universal ribosomal protein uL22 family. In terms of assembly, part of the 50S ribosomal subunit.

It is found in the plastid. The protein resides in the chloroplast. Its function is as follows. This protein binds specifically to 23S rRNA. Functionally, the globular domain of the protein is located near the polypeptide exit tunnel on the outside of the subunit, while an extended beta-hairpin is found that lines the wall of the exit tunnel in the center of the 70S ribosome. This is Large ribosomal subunit protein uL22c (rpl22) from Pinus thunbergii (Japanese black pine).